The chain runs to 263 residues: Small ribosomal subunit protein eS1 (263 aa).

Basic and acidic residues predominate over residues 236-254 (GDGKGGSDEPGARVDRPEG). The tract at residues 236 to 263 (GDGKGGSDEPGARVDRPEGYEPPVQETV) is disordered.

This sequence belongs to the eukaryotic ribosomal protein eS1 family. Component of the small ribosomal subunit. Mature ribosomes consist of a small (40S) and a large (60S) subunit. The 40S subunit contains about 33 different proteins and 1 molecule of RNA (18S). The 60S subunit contains about 49 different proteins and 3 molecules of RNA (28S, 5.8S and 5S).

It is found in the cytoplasm. This is Small ribosomal subunit protein eS1 from Periplaneta americana (American cockroach).